Here is a 342-residue protein sequence, read N- to C-terminus: tRNA N6-adenosine threonylcarbamoyltransferase (342 aa).

Residues histidine 111 and histidine 115 each contribute to the Fe cation site. Substrate contacts are provided by residues 133–137 (AVSGG), aspartate 166, glycine 179, aspartate 183, and asparagine 273. Fe cation is bound at residue aspartate 301.

Belongs to the KAE1 / TsaD family. It depends on Fe(2+) as a cofactor.

It is found in the cytoplasm. It carries out the reaction L-threonylcarbamoyladenylate + adenosine(37) in tRNA = N(6)-L-threonylcarbamoyladenosine(37) in tRNA + AMP + H(+). Required for the formation of a threonylcarbamoyl group on adenosine at position 37 (t(6)A37) in tRNAs that read codons beginning with adenine. Is involved in the transfer of the threonylcarbamoyl moiety of threonylcarbamoyl-AMP (TC-AMP) to the N6 group of A37, together with TsaE and TsaB. TsaD likely plays a direct catalytic role in this reaction. This chain is tRNA N6-adenosine threonylcarbamoyltransferase, found in Syntrophotalea carbinolica (strain DSM 2380 / NBRC 103641 / GraBd1) (Pelobacter carbinolicus).